A 171-amino-acid chain; its full sequence is MTGIGEQSIAEQVRRLLEPVLERDGYELVEVEWARLAGRWTLRVFIDKAGGVGIDDCQAVSKTVEPILDVADVIEPAYDLEVSSPGLDRPLRKPGDFDRYAGQRVHVKAYGPVAGTAPGAPARKHWTGVLKGFRDGAVELDVDGVLHRVPHDQIAKANLEYDVEGDLRRKD.

This sequence belongs to the RimP family.

The protein localises to the cytoplasm. Functionally, required for maturation of 30S ribosomal subunits. This chain is Ribosome maturation factor RimP, found in Anaeromyxobacter dehalogenans (strain 2CP-1 / ATCC BAA-258).